A 553-amino-acid chain; its full sequence is Coiled-coil domain-containing protein 22 homolog (553 aa).

Coiled-coil stretches lie at residues 261 to 404 (LEEL…TATQ) and 498 to 553 (NVTK…VAKA).

It belongs to the CCDC22 family.

The polypeptide is Coiled-coil domain-containing protein 22 homolog (Drosophila pseudoobscura pseudoobscura (Fruit fly)).